We begin with the raw amino-acid sequence, 457 residues long: Protein unc-93 homolog A (457 aa).

The next 5 membrane-spanning stretches (helical) occupy residues 8 to 28, 42 to 62, 65 to 85, 86 to 106, and 140 to 160; these read VLVV…LQSL, ALST…PLLI, LGCK…SVGN, FFAS…GAAP, and IFFL…SLVF. N-linked (GlcNAc...) asparagine glycosylation occurs at Asn-190. The next 6 helical transmembrane spans lie at 202 to 222, 257 to 277, 291 to 311, 320 to 340, 344 to 364, and 395 to 415; these read TLLG…AAFL, LCLL…LSSE, FVGY…VLYG, AVLY…LLLW, ADHL…DAVW, and FVIA…YILL.

Belongs to the unc-93 family. In terms of tissue distribution, expressed in testis, small intestine, spleen, prostate and ovary.

It localises to the cell membrane. The sequence is that of Protein unc-93 homolog A (UNC93A) from Homo sapiens (Human).